The following is a 391-amino-acid chain: 2-deoxy-scyllo-inosose synthase (391 aa).

Residues aspartate 42, 73-76 (EVHK), 105-109 (GVTGN), 129-130 (TT), 140-142 (SLK), and 151-152 (KN) contribute to the NAD(+) site. The active site involves lysine 142. Glutamate 184 serves as a coordination point for Co(2+). Residue glutamate 244 is part of the active site. 2 residues coordinate Co(2+): histidine 247 and histidine 263.

This sequence belongs to the sugar phosphate cyclases superfamily. DOI synthase family. Requires NAD(+) as cofactor. It depends on Co(2+) as a cofactor.

The catalysed reaction is D-glucose 6-phosphate = 2-deoxy-L-scyllo-inosose + phosphate. Its pathway is metabolic intermediate biosynthesis; 2-deoxystreptamine biosynthesis; 2-deoxystreptamine from D-glucose 6-phosphate: step 1/4. It functions in the pathway antibiotic biosynthesis; ribostamycin biosynthesis. Its function is as follows. Catalyzes the intramolecular carbocycle formation from D-glucose-6-phosphate to 2-deoxy-scyllo-inosose (DOI). The sequence is that of 2-deoxy-scyllo-inosose synthase (rbmA) from Streptomyces ribosidificus.